Reading from the N-terminus, the 128-residue chain is Fluoride-specific ion channel FluC 1 (128 aa).

4 consecutive transmembrane segments (helical) span residues 10–30, 32–52, 59–79, and 93–113; these read VAFF…AFSF, GTVI…YFFL, AWLT…FSSF, and FGAL…AWAG. Residues glycine 71 and threonine 74 each coordinate Na(+).

Belongs to the fluoride channel Fluc/FEX (TC 1.A.43) family.

Its subcellular location is the cell membrane. It catalyses the reaction fluoride(in) = fluoride(out). Na(+) is not transported, but it plays an essential structural role and its presence is essential for fluoride channel function. In terms of biological role, fluoride-specific ion channel. Important for reducing fluoride concentration in the cell, thus reducing its toxicity. This Lactobacillus delbrueckii subsp. bulgaricus (strain ATCC 11842 / DSM 20081 / BCRC 10696 / JCM 1002 / NBRC 13953 / NCIMB 11778 / NCTC 12712 / WDCM 00102 / Lb 14) protein is Fluoride-specific ion channel FluC 1.